A 187-amino-acid chain; its full sequence is Shikimate kinase (187 aa).

14 to 19 (TSGKST) is a binding site for ATP. S18 is a Mg(2+) binding site. The substrate site is built by D36, R60, and G82. ATP is bound at residue R120. R147 is a binding site for substrate.

It belongs to the shikimate kinase family. Monomer. It depends on Mg(2+) as a cofactor.

It localises to the cytoplasm. It catalyses the reaction shikimate + ATP = 3-phosphoshikimate + ADP + H(+). It participates in metabolic intermediate biosynthesis; chorismate biosynthesis; chorismate from D-erythrose 4-phosphate and phosphoenolpyruvate: step 5/7. Catalyzes the specific phosphorylation of the 3-hydroxyl group of shikimic acid using ATP as a cosubstrate. The protein is Shikimate kinase of Chloroherpeton thalassium (strain ATCC 35110 / GB-78).